The primary structure comprises 340 residues: Anthranilate phosphoribosyltransferase (340 aa).

5-phospho-alpha-D-ribose 1-diphosphate contacts are provided by residues glycine 78, 81–82 (GD), threonine 86, 88–91 (NIST), 106–114 (KHGNRSVSS), and serine 118. Glycine 78 lines the anthranilate pocket. Position 90 (serine 90) interacts with Mg(2+). Asparagine 109 lines the anthranilate pocket. An anthranilate-binding site is contributed by arginine 164. Mg(2+) is bound by residues aspartate 223 and glutamate 224.

Belongs to the anthranilate phosphoribosyltransferase family. As to quaternary structure, homodimer. The cofactor is Mg(2+).

The catalysed reaction is N-(5-phospho-beta-D-ribosyl)anthranilate + diphosphate = 5-phospho-alpha-D-ribose 1-diphosphate + anthranilate. It functions in the pathway amino-acid biosynthesis; L-tryptophan biosynthesis; L-tryptophan from chorismate: step 2/5. Functionally, catalyzes the transfer of the phosphoribosyl group of 5-phosphorylribose-1-pyrophosphate (PRPP) to anthranilate to yield N-(5'-phosphoribosyl)-anthranilate (PRA). This Bacillus pumilus (strain SAFR-032) protein is Anthranilate phosphoribosyltransferase.